The primary structure comprises 373 residues: 3-isopropylmalate dehydrogenase AMT6 (373 aa).

Residue 77 to 79 (VGG) participates in NADP(+) binding. Residues Arg97 and Arg136 each coordinate substrate. 3 residues coordinate Mg(2+): Asp227, Asp252, and Asp256. An NADP(+)-binding site is contributed by 284 to 289 (SRIRGL).

Belongs to the isocitrate and isopropylmalate dehydrogenases family. Homodimer. Mg(2+) serves as cofactor. It depends on Mn(2+) as a cofactor.

The catalysed reaction is (2R,3S)-3-isopropylmalate + NAD(+) = 4-methyl-2-oxopentanoate + CO2 + NADH. The protein operates within amino-acid biosynthesis; L-leucine biosynthesis; L-leucine from 3-methyl-2-oxobutanoate: step 3/4. Its pathway is mycotoxin biosynthesis. Its function is as follows. 3-isopropylmalate dehydrogenase; part of the gene clusters that mediate the biosynthesis of AM-toxins, host-selective toxins (HSTs) causing Alternaria blotch on apple, a worldwide distributed disease. AM-toxins are cyclic depsipeptides containing the 3 residues 2-hydroxy-isovaleric acid (2-HIV), dehydroalanine, L-alanine which are common for all 3 AM-toxins I to III. The fourth precursor is L-alpha-amino-methoxyphenyl-valeric acid (L-Amv) for AM-toxin I, L-alpha-amino-phenyl-valeric acid (L-Apv) for AM-toxin II, and L-alpha-amino-hydroxyphenyl-valeric acid (L-Ahv) for AM-toxin III. AM-toxins have two target sites for affecting susceptible apple cells; they cause invagination of the plasma membrane and electrolyte loss and chloroplast disorganization. The non-ribosomal peptide synthetase AMT1 contains 4 catalytic modules and is responsible for activation of each residue in AM-toxin. The aldo-keto reductase AMT2 catalyzes the conversion of 2-keto-isovaleric acid (2-KIV) to 2-hydroxy-isovaleric acid (2-HIV), one of the precursor residues incorporated by AMT1 during AM-toxin biosynthesis, by reduction of its ketone to an alcohol. The cytochrome P450 monooxygenase AMT3 and the thioesterase AMT4 are also important for AM-toxin production, but their exact function within the AM-toxin biosynthesis are not known yet. Up to 21 proteins (including AMT1 to AMT4) are predicted to be involved in AM-toxin biosynthesis since their expression ishighly up-regulated in AM-toxin-producing cultures. The sequence is that of 3-isopropylmalate dehydrogenase AMT6 from Alternaria alternata (Alternaria rot fungus).